The sequence spans 124 residues: Small ribosomal subunit protein uS12 (124 aa).

Asp89 is subject to 3-methylthioaspartic acid.

Belongs to the universal ribosomal protein uS12 family. As to quaternary structure, part of the 30S ribosomal subunit. Contacts proteins S8 and S17. May interact with IF1 in the 30S initiation complex.

Functionally, with S4 and S5 plays an important role in translational accuracy. Interacts with and stabilizes bases of the 16S rRNA that are involved in tRNA selection in the A site and with the mRNA backbone. Located at the interface of the 30S and 50S subunits, it traverses the body of the 30S subunit contacting proteins on the other side and probably holding the rRNA structure together. The combined cluster of proteins S8, S12 and S17 appears to hold together the shoulder and platform of the 30S subunit. This Edwardsiella ictaluri (strain 93-146) protein is Small ribosomal subunit protein uS12.